The sequence spans 61 residues: Small ribosomal subunit protein uS14 (61 aa).

Zn(2+) is bound by residues Cys24, Cys27, Cys40, and Cys43.

It belongs to the universal ribosomal protein uS14 family. Zinc-binding uS14 subfamily. In terms of assembly, part of the 30S ribosomal subunit. Contacts proteins S3 and S10. It depends on Zn(2+) as a cofactor.

Binds 16S rRNA, required for the assembly of 30S particles and may also be responsible for determining the conformation of the 16S rRNA at the A site. The sequence is that of Small ribosomal subunit protein uS14 from Thermoanaerobacter sp. (strain X514).